Reading from the N-terminus, the 695-residue chain is Elongation factor G (695 aa).

Residues 10 to 285 (DKTRNIGIMA…GVVDYLPSPL (276 aa)) form the tr-type G domain. GTP contacts are provided by residues 19–26 (AHIDAGKT), 83–87 (DTPGH), and 137–140 (NKMD).

Belongs to the TRAFAC class translation factor GTPase superfamily. Classic translation factor GTPase family. EF-G/EF-2 subfamily.

It is found in the cytoplasm. Catalyzes the GTP-dependent ribosomal translocation step during translation elongation. During this step, the ribosome changes from the pre-translocational (PRE) to the post-translocational (POST) state as the newly formed A-site-bound peptidyl-tRNA and P-site-bound deacylated tRNA move to the P and E sites, respectively. Catalyzes the coordinated movement of the two tRNA molecules, the mRNA and conformational changes in the ribosome. This is Elongation factor G from Latilactobacillus sakei subsp. sakei (strain 23K) (Lactobacillus sakei subsp. sakei).